We begin with the raw amino-acid sequence, 479 residues long: Ribosomal RNA small subunit methyltransferase F (479 aa).

S-adenosyl-L-methionine is bound by residues 125–131, Glu-149, Asp-176, and Asp-194; that span reads AAAPGSK. Cys-247 acts as the Nucleophile in catalysis.

This sequence belongs to the class I-like SAM-binding methyltransferase superfamily. RsmB/NOP family.

Its subcellular location is the cytoplasm. It catalyses the reaction cytidine(1407) in 16S rRNA + S-adenosyl-L-methionine = 5-methylcytidine(1407) in 16S rRNA + S-adenosyl-L-homocysteine + H(+). Specifically methylates the cytosine at position 1407 (m5C1407) of 16S rRNA. The sequence is that of Ribosomal RNA small subunit methyltransferase F from Salmonella paratyphi A (strain ATCC 9150 / SARB42).